We begin with the raw amino-acid sequence, 350 residues long: Casein kinase II subunit alpha' (350 aa).

Tyrosine 13 is subject to Phosphotyrosine. Phosphoserine is present on residues serine 18 and serine 21. A Protein kinase domain is found at 40–325 (YQLVRKLGRG…AKEAMEHPYF (286 aa)). ATP contacts are provided by residues 46-54 (LGRGKYSEV) and lysine 69. Residue lysine 97 is modified to N6-acetyllysine. Aspartate 157 (proton acceptor) is an active-site residue. Serine 288 is modified (phosphoserine).

This sequence belongs to the protein kinase superfamily. Ser/Thr protein kinase family. CK2 subfamily. In terms of assembly, heterotetramer composed of two catalytic subunits (alpha chain and/or alpha' chain) and two regulatory subunits (beta chains). The tetramer can exist as a combination of 2 alpha/2 beta, 2 alpha'/2 beta or 1 alpha/1 alpha'/2 beta subunits. Also part of a CK2-SPT16-SSRP1 complex composed of SSRP1, SUPT16H, CSNK2A1, CSNK2A2 and CSNK2B, which forms following UV irradiation. Interacts with RNPS1. Interacts with CSNK2A2IP (via C-terminus). Interacts with SIRT6; preventing CSNK2A2 localization to the nucleus. Interacts with HIRIP3. Highly expressed in brain, testis and mature epididymal spermatozoa. Weakly expressed in kidney, liver, lung, spleen and thymus (at protein level).

The protein localises to the nucleus. It localises to the cytoplasm. It catalyses the reaction L-seryl-[protein] + ATP = O-phospho-L-seryl-[protein] + ADP + H(+). The enzyme catalyses L-threonyl-[protein] + ATP = O-phospho-L-threonyl-[protein] + ADP + H(+). Constitutively active protein kinase whose activity is not directly affected by phosphorylation. Seems to be regulated by level of expression and localization. Functionally, catalytic subunit of a constitutively active serine/threonine-protein kinase complex that phosphorylates a large number of substrates containing acidic residues C-terminal to the phosphorylated serine or threonine. Regulates numerous cellular processes, such as cell cycle progression, apoptosis and transcription, as well as viral infection. May act as a regulatory node which integrates and coordinates numerous signals leading to an appropriate cellular response. During mitosis, functions as a component of the p53/TP53-dependent spindle assembly checkpoint (SAC) that maintains cyclin-B-CDK1 activity and G2 arrest in response to spindle damage. Also required for p53/TP53-mediated apoptosis, phosphorylating 'Ser-392' of p53/TP53 following UV irradiation. Phosphorylates a number of DNA repair proteins in response to DNA damage, such as MDC1, RAD9A, RAD51 and HTATSF1, promoting their recruitment to DNA damage sites. Can also negatively regulate apoptosis. Phosphorylates the caspases CASP9 and CASP2 and the apoptotic regulator NOL3. Phosphorylation protects CASP9 from cleavage and activation by CASP8, and inhibits the dimerization of CASP2 and activation of CASP8. Regulates transcription by direct phosphorylation of RNA polymerases I, II, III and IV. Also phosphorylates and regulates numerous transcription factors including NF-kappa-B, STAT1, CREB1, IRF1, IRF2, ATF1, SRF, MAX, JUN, FOS, MYC and MYB. Phosphorylates Hsp90 and its co-chaperones FKBP4 and CDC37, which is essential for chaperone function. Regulates Wnt signaling by phosphorylating CTNNB1 and the transcription factor LEF1. Acts as an ectokinase that phosphorylates several extracellular proteins. May phosphorylate histone H2A on 'Ser-1'. In Mus musculus (Mouse), this protein is Casein kinase II subunit alpha' (Csnk2a2).